Consider the following 418-residue polypeptide: Actin-related protein 3 (418 aa).

Position 1 is an N-acetylmethionine (Met-1).

The protein belongs to the actin family. ARP3 subfamily. Component of the Arp2/3 complex composed of arpB/Arp2, arpC/Arp3, arcA/p41-arc, arcB/p34-arc, arcC/p21-arc, arcD/p20-arc and arcE/p16-arc. Interacts with carmil (via the region between the LRR domain and COOH-terminal proline-rich domain); carmil is required for Arp2/3-dependent actin nucleation. Arp2/3 complex, MyoB, MyoC, and the alpha and beta subunits of capping protein all form a larger complex with carmil.

It localises to the cytoplasm. The protein localises to the cytoskeleton. It is found in the cytosol. The protein resides in the cell cortex. Its subcellular location is the cell projection. It localises to the pseudopodium. Functionally, functions as ATP-binding component of the Arp2/3 complex which is involved in regulation of actin polymerization and together with an activating nucleation-promoting factor (NPF) mediates the formation of branched actin networks. Seems to contact the pointed end of the daughter actin filament. The Arp2/3 complex is involved in organizing the actin system in cell motility and chemotaxis, in phagocytosis and macropinocytosis, at late steps of endosome processing, and in mitosis. In concert with a group of other proteins, the Arp2/3 complex plays a general role in the rapid activation and adaptation of the actin system to its multiple functions. The polypeptide is Actin-related protein 3 (arpC) (Dictyostelium discoideum (Social amoeba)).